A 524-amino-acid polypeptide reads, in one-letter code: GMP synthase [glutamine-hydrolyzing] (524 aa).

Residues 10–199 enclose the Glutamine amidotransferase type-1 domain; it reads PVLVVDFGAQ…LTEVAGLEQT (190 aa). C87 functions as the Nucleophile in the catalytic mechanism. Residues H173 and E175 contribute to the active site. The GMPS ATP-PPase domain maps to 200-398; it reads WTSANIAQQL…LGLPEEIVAR (199 aa). 228–234 contributes to the ATP binding site; the sequence is SGGVDSA.

As to quaternary structure, homodimer.

The enzyme catalyses XMP + L-glutamine + ATP + H2O = GMP + L-glutamate + AMP + diphosphate + 2 H(+). The protein operates within purine metabolism; GMP biosynthesis; GMP from XMP (L-Gln route): step 1/1. Functionally, catalyzes the synthesis of GMP from XMP. The chain is GMP synthase [glutamine-hydrolyzing] (guaA) from Corynebacterium ammoniagenes (Brevibacterium ammoniagenes).